We begin with the raw amino-acid sequence, 89 residues long: Large ribosomal subunit protein uL23c (89 aa).

It belongs to the universal ribosomal protein uL23 family. As to quaternary structure, part of the 50S ribosomal subunit.

The protein localises to the plastid. It localises to the chloroplast. In terms of biological role, binds to 23S rRNA. This is Large ribosomal subunit protein uL23c (rpl23) from Zygnema circumcarinatum (Green alga).